Consider the following 401-residue polypeptide: Elongation factor Tu 1 (401 aa).

In terms of domain architecture, tr-type G spans 10 to 209; sequence KPHVNVGTIG…AVDEYIPTPV (200 aa). A G1 region spans residues 19 to 26; sequence GHVDHGKT. 19-26 is a GTP binding site; that stretch reads GHVDHGKT. A Mg(2+)-binding site is contributed by T26. A G2 region spans residues 60–64; the sequence is GITIA. The interval 81-84 is G3; sequence DCPG. Residues 81-85 and 136-139 each bind GTP; these read DCPGH and NKVD. Residues 136–139 are G4; sequence NKVD. Positions 174 to 176 are G5; sequence SAL.

Belongs to the TRAFAC class translation factor GTPase superfamily. Classic translation factor GTPase family. EF-Tu/EF-1A subfamily. As to quaternary structure, monomer.

The protein resides in the cytoplasm. It carries out the reaction GTP + H2O = GDP + phosphate + H(+). GTP hydrolase that promotes the GTP-dependent binding of aminoacyl-tRNA to the A-site of ribosomes during protein biosynthesis. This Roseiflexus castenholzii (strain DSM 13941 / HLO8) protein is Elongation factor Tu 1.